The following is a 320-amino-acid chain: Eukaryotic translation initiation factor 3 subunit G (320 aa).

A disordered region spans residues 1–59; sequence MPTGDFDSKPSWADQVEEEGEDDKCVTSELLKGIPLATGDTSPEPELLPGAPLPPPKEV. Phosphoserine occurs at positions 8 and 11. Phosphothreonine is present on residues threonine 38 and threonine 41. 4 positions are modified to phosphoserine: serine 42, serine 189, serine 223, and serine 264. The segment at 209–234 is disordered; that stretch reads KTGKYVPPSLRDGASRRGESMQPNRR. Over residues 221–234 the composition is skewed to basic and acidic residues; that stretch reads GASRRGESMQPNRR. One can recognise an RRM domain in the interval 239–317; the sequence is ATIRVTNLSE…LILNVEWAKP (79 aa).

Component of the eukaryotic translation initiation factor 3 (eIF-3) complex, which is composed of 13 subunits: EIF3A, EIF3B, EIF3C, EIF3D, EIF3E, EIF3F, EIF3G, EIF3H, EIF3I, EIF3J, EIF3K, EIF3L and EIF3M. The eIF-3 complex appears to include 3 stable modules: module A is composed of EIF3A, EIF3B, EIF3G and EIF3I; module B is composed of EIF3F, EIF3H, and EIF3M; and module C is composed of EIF3C, EIF3D, EIF3E, EIF3K and EIF3L. EIF3C of module C binds EIF3B of module A and EIF3H of module B, thereby linking the three modules. EIF3J is a labile subunit that binds to the eIF-3 complex via EIF3B. The eIF-3 complex interacts with RPS6KB1 under conditions of nutrient depletion. Mitogenic stimulation leads to binding and activation of a complex composed of MTOR and RPTOR, leading to phosphorylation and release of RPS6KB1 and binding of EIF4B to eIF-3. Interacts (via C-terminus) with AIFM1 (via N-terminus). Interacts with DHX33; the interaction is independent of RNA. Phosphorylated. Phosphorylation is enhanced upon serum stimulation.

The protein localises to the cytoplasm. It is found in the nucleus. It localises to the perinuclear region. In terms of biological role, RNA-binding component of the eukaryotic translation initiation factor 3 (eIF-3) complex, which is required for several steps in the initiation of protein synthesis. The eIF-3 complex associates with the 40S ribosome and facilitates the recruitment of eIF-1, eIF-1A, eIF-2:GTP:methionyl-tRNAi and eIF-5 to form the 43S pre-initiation complex (43S PIC). The eIF-3 complex stimulates mRNA recruitment to the 43S PIC and scanning of the mRNA for AUG recognition. The eIF-3 complex is also required for disassembly and recycling of post-termination ribosomal complexes and subsequently prevents premature joining of the 40S and 60S ribosomal subunits prior to initiation. The eIF-3 complex specifically targets and initiates translation of a subset of mRNAs involved in cell proliferation, including cell cycling, differentiation and apoptosis, and uses different modes of RNA stem-loop binding to exert either translational activation or repression. This subunit can bind 18S rRNA. Functionally, (Microbial infection) In case of FCV infection, plays a role in the ribosomal termination-reinitiation event leading to the translation of VP2. In Homo sapiens (Human), this protein is Eukaryotic translation initiation factor 3 subunit G.